The primary structure comprises 412 residues: uncharacterized protein (412 aa).

Residues 50–264 (EVDIRTAYIN…KSGRRIVIGD (215 aa)) form the Radical SAM core domain. 3 residues coordinate [4Fe-4S] cluster: cysteine 64, cysteine 68, and cysteine 71.

The protein belongs to the radical SAM superfamily. Anaerobic sulfatase-maturating enzyme family. [4Fe-4S] cluster is required as a cofactor.

This is an uncharacterized protein from Archaeoglobus fulgidus (strain ATCC 49558 / DSM 4304 / JCM 9628 / NBRC 100126 / VC-16).